Consider the following 87-residue polypeptide: uncharacterized protein (87 aa).

Residues 1 to 25 form the signal peptide; it reads MKIRKILLSSALSFGMLISAVPALA.

This is an uncharacterized protein from Bacillus subtilis (strain 168).